The following is a 142-amino-acid chain: MAP3K7 C-terminal-like protein (142 aa).

As to expression, detected in lung and peripheral blood leukocytes. Expressed predominantly in peripheral blood leukocytes and ubiquitously in adult and fetal tissues. Also expressed strongly in breast carcinoma GI-101, colon adenocarcinoma GI-112, and prostatic adenocarcinoma PC3.

The chain is MAP3K7 C-terminal-like protein (MAP3K7CL) from Homo sapiens (Human).